The following is a 209-amino-acid chain: Kynurenine formamidase (209 aa).

Residue tryptophan 18 participates in substrate binding. Histidine 48, histidine 52, and aspartate 54 together coordinate Zn(2+). Catalysis depends on histidine 58, which acts as the Proton donor/acceptor. Zn(2+) contacts are provided by histidine 160 and glutamate 172.

This sequence belongs to the Cyclase 1 superfamily. KynB family. As to quaternary structure, homodimer. Zn(2+) serves as cofactor.

The enzyme catalyses N-formyl-L-kynurenine + H2O = L-kynurenine + formate + H(+). The protein operates within amino-acid degradation; L-tryptophan degradation via kynurenine pathway; L-kynurenine from L-tryptophan: step 2/2. Catalyzes the hydrolysis of N-formyl-L-kynurenine to L-kynurenine, the second step in the kynurenine pathway of tryptophan degradation. The sequence is that of Kynurenine formamidase from Paraburkholderia phymatum (strain DSM 17167 / CIP 108236 / LMG 21445 / STM815) (Burkholderia phymatum).